A 1008-amino-acid chain; its full sequence is Ubiquitin carboxyl-terminal hydrolase 16 (1008 aa).

A helical membrane pass occupies residues 7-27 (LGISSLVLVVSLVLPLIGLFV). Zn(2+) contacts are provided by C74, C77, C85, C88, C94, C98, H107, and C111. Residues 74–111 (CPVCYCLATTRCSRCKAVRYCSGKCQIIHWRQGHKDEC) form an MYND-type zinc finger. Disordered stretches follow at residues 122-149 (DESD…GPEP), 159-178 (LSNR…DNKD), 187-233 (VSVA…LDAH), 275-309 (SVHK…DPSL), and 326-379 (SDSC…YISD). The span at 193–203 (SGSSFSGFSSS) shows a compositional bias: low complexity. A compositionally biased stretch (basic and acidic residues) spans 222 to 233 (ESERSESLLDAH). Residues 284-295 (GQNQSQSRSLHS) show a composition bias toward polar residues. Residues 340–351 (SSLHFSFGSGSS) show a composition bias toward low complexity. The USP domain maps to 542 to 847 (CGLINVGNSC…GAYMLFYARC (306 aa)). Residue C551 is the Nucleophile of the active site. H807 acts as the Proton acceptor in catalysis. 2 disordered regions span residues 859-905 (KTEA…GNIQ) and 952-1008 (FIFG…GGER). 2 stretches are compositionally biased toward low complexity: residues 878-888 (STISRSVSTSS) and 965-992 (SETP…RSSP).

Belongs to the peptidase C19 family. Interacts with SHM1 and SHM4. Interacts with HIPP27. As to expression, expressed in flowers, siliques, rosette leaves, cauline leaves, stems and at a lower level in roots. In roots, expressed in the sieve elements.

Its subcellular location is the membrane. The catalysed reaction is Thiol-dependent hydrolysis of ester, thioester, amide, peptide and isopeptide bonds formed by the C-terminal Gly of ubiquitin (a 76-residue protein attached to proteins as an intracellular targeting signal).. Its function is as follows. Recognizes and hydrolyzes the peptide bond at the C-terminal Gly of ubiquitin. Involved in the processing of poly-ubiquitin precursors as well as that of ubiquitinated proteins. Involved in salt tolerance by modulating sodium transport activity and repressing cell death at least partially through modulating SHM1 stability and activity. Involved in cadmium tolerance by interacting with HIPP27 and probably modulating its stability. The polypeptide is Ubiquitin carboxyl-terminal hydrolase 16 (UBP16) (Arabidopsis thaliana (Mouse-ear cress)).